Reading from the N-terminus, the 585-residue chain is Chaperonin CPN60-like 1, mitochondrial (585 aa).

Residues 1–32 constitute a mitochondrion transit peptide; sequence MYRLVSNVASKARIARKCTSQIGSRLNSTRNY.

It belongs to the chaperonin (HSP60) family.

It localises to the mitochondrion. Implicated in mitochondrial protein import and macromolecular assembly. May facilitate the correct folding of imported proteins. May also prevent misfolding and promote the refolding and proper assembly of unfolded polypeptides generated under stress conditions in the mitochondrial matrix. The protein is Chaperonin CPN60-like 1, mitochondrial of Arabidopsis thaliana (Mouse-ear cress).